The following is a 772-amino-acid chain: Glucocorticoid receptor (772 aa).

Residues 1 to 15 are compositionally biased toward basic and acidic residues; that stretch reads MDSKESLSPPGREEV. The segment at 1 to 22 is disordered; it reads MDSKESLSPPGREEVPSSVLRP. The modulating stretch occupies residues 1 to 415; that stretch reads MDSKESLSPP…TTAAGPPPKL (415 aa). Arg-25 carries the omega-N-methylarginine modification. The tract at residues 39–82 is disordered; sequence APVRVPASSPSLAPAAQPDSKQQRLAVDFPKGSASNAQQPDLSR. The span at 44–58 shows a compositional bias: low complexity; the sequence is PASSPSLAPAAQPDS. Ser-47, Ser-115, Ser-136, and Ser-143 each carry phosphoserine. The interval 132 to 186 is disordered; that stretch reads NRSASGADNPRSTAPAAGSAAPTEGFPKTHSDLASERQNPKGQTGGSAGSAKLHP. The span at 143-156 shows a compositional bias: low complexity; it reads STAPAAGSAAPTEG. Residues 158–170 show a composition bias toward basic and acidic residues; it reads PKTHSDLASERQN. Phosphoserine occurs at positions 203, 211, and 226. Residue Lys-258 forms a Glycyl lysine isopeptide (Lys-Gly) (interchain with G-Cter in SUMO2) linkage. Residues Lys-277 and Lys-293 each participate in a glycyl lysine isopeptide (Lys-Gly) (interchain with G-Cter in SUMO); alternate cross-link. Glycyl lysine isopeptide (Lys-Gly) (interchain with G-Cter in SUMO2); alternate cross-links involve residues Lys-277 and Lys-293. Phosphoserine is present on residues Ser-307 and Ser-400. A Glycyl lysine isopeptide (Lys-Gly) (interchain with G-Cter in ubiquitin) cross-link involves residue Lys-414. 2 NR C4-type zinc fingers span residues 416 to 436 and 452 to 476; these read CLVCSDEASGCHYGVLTCGSC and CAGRNDCIIDKIRRKNCPACRYRKC. The segment at residues 416–481 is a DNA-binding region (nuclear receptor); sequence CLVCSDEASG…RYRKCLQAGM (66 aa). N6-acetyllysine is present on residues Lys-475, Lys-487, Lys-489, and Lys-490. The interaction with CLOCK stretch occupies residues 480-772; that stretch reads GMNLEARKTK…NIKKLLFHQK (293 aa). Residues 482 to 518 are hinge; the sequence is NLEARKTKKKIKGIQQTSTGVSQETSENPSNRTVVPA. The disordered stretch occupies residues 494-513; it reads GIQQTSTGVSQETSENPSNR. Residues 499-513 show a composition bias toward polar residues; the sequence is STGVSQETSENPSNR. The 235-residue stretch at 519–753 folds into the NR LBD domain; that stretch reads ALPQLTPTLV…FPEMLAEIIT (235 aa). An interaction with CRY1 region spans residues 527–692; the sequence is LVSLLEVIEP…EIRMTYIKEL (166 aa). Lys-698 participates in a covalent cross-link: Glycyl lysine isopeptide (Lys-Gly) (interchain with G-Cter in SUMO).

It belongs to the nuclear hormone receptor family. NR3 subfamily. As to quaternary structure, heteromultimeric cytoplasmic complex with HSP90AA1, HSPA1A/HSPA1B, and FKBP5 or another immunophilin such as PPID, STIP1, or the immunophilin homolog PPP5C. Upon ligand binding FKBP5 dissociates from the complex and FKBP4 takes its place, thereby linking the complex to dynein and mediating transport to the nucleus, where the complex dissociates. Probably forms a complex composed of chaperones HSP90 and HSP70, co-chaperones CDC37, PPP5C, TSC1 and client protein TSC2, CDK4, AKT, RAF1 and NR3C1; this complex does not contain co-chaperones STIP1/HOP and PTGES3/p23. Directly interacts with UNC45A. Binds to DNA as a homodimer, and as heterodimer with NR3C2 or the retinoid X receptor. Binds STAT5A and STAT5B homodimers and heterodimers. Interacts with NRIP1, POU2F1, POU2F2 and TRIM28. Interacts with several coactivator complexes, including the SMARCA4 complex, CREBBP/EP300, TADA2L (Ada complex) and p160 coactivators such as NCOA2 and NCOA6. Interaction with BAG1 inhibits transactivation. Interacts with HEXIM1 and TGFB1I1. Interacts with NCOA1. Interacts with NCOA3, SMARCA4, SMARCC1, SMARCD1, and SMARCE1. Interacts with CLOCK, CRY1 and CRY2 in a ligand-dependent fashion. Interacts with CIART. Interacts with RWDD3. Interacts with UBE2I/UBC9 and this interaction is enhanced in the presence of RWDD3. Interacts with GRIP1. Interacts with NR4A3 (via nuclear receptor DNA-binding domain), represses transcription activity of NR4A3 on the POMC promoter Nur response element (NurRE). Directly interacts with PNRC2 to attract and form a complex with UPF1 and DCP1A; the interaction leads to rapid mRNA degradation. Interacts with GSK3B. Interacts with FNIP1 and FNIP2. Interacts (via C-terminus) with HNRNPU (via C-terminus). Interacts with MCM3AP. Interacts (via domain NR LBD) with HSP90AA1 and HSP90AB1. In the absence of hormonal ligand, interacts with TACC1. Interacts (via NR LBD domain) with ZNF764 (via KRAB domain); the interaction regulates transcription factor activity of NR3C1 by directing its actions toward certain biologic pathways. Acetylation by CLOCK reduces its binding to glucocorticoid response elements and its transcriptional activity. Post-translationally, increased proteasome-mediated degradation in response to glucocorticoids. In terms of processing, phosphorylated in the absence of hormone; becomes hyperphosphorylated in the presence of glucocorticoid. The Ser-203, Ser-226 and Ser-399-phosphorylated forms are mainly cytoplasmic, and the Ser-211-phosphorylated form is nuclear. Phosphorylation at Ser-211 increases transcriptional activity. Phosphorylation at Ser-203, Ser-226 and Ser-399 decreases signaling capacity. Phosphorylation at Ser-399 may protect from glucocorticoid-induced apoptosis. Phosphorylation at Ser-203 and Ser-211 is not required in regulation of chromosome segregation. May be dephosphorylated by PPP5C, attenuates NR3C1 action. Ubiquitinated by UBR5, leading to its degradation: UBR5 specifically recognizes and binds ligand-bound NR3C1 when it is not associated with coactivators (NCOAs). In presence of NCOAs, the UBR5-degron is not accessible, preventing its ubiquitination and degradation. Post-translationally, sumoylation at Lys-277 and Lys-293 negatively regulates its transcriptional activity. Sumoylation at Lys-698 positively regulates its transcriptional activity in the presence of RWDD3. Sumoylation at Lys-277 and Lys-293 is dispensable whereas sumoylation at Lys-698 is critical for the stimulatory effect of RWDD3 on its transcriptional activity. Heat shock increases sumoylation in a RWDD3-dependent manner.

It localises to the cytoplasm. Its subcellular location is the nucleus. The protein localises to the mitochondrion. The protein resides in the cytoskeleton. It is found in the spindle. It localises to the microtubule organizing center. Its subcellular location is the centrosome. The protein localises to the chromosome. The protein resides in the nucleoplasm. In terms of biological role, receptor for glucocorticoids (GC). Has a dual mode of action: as a transcription factor that binds to glucocorticoid response elements (GRE), both for nuclear and mitochondrial DNA, and as a modulator of other transcription factors. Affects inflammatory responses, cellular proliferation and differentiation in target tissues. Involved in chromatin remodeling. Plays a role in rapid mRNA degradation by binding to the 5' UTR of target mRNAs and interacting with PNRC2 in a ligand-dependent manner which recruits the RNA helicase UPF1 and the mRNA-decapping enzyme DCP1A, leading to RNA decay. Could act as a coactivator for STAT5-dependent transcription upon growth hormone (GH) stimulation and could reveal an essential role of hepatic GR in the control of body growth. Mediates glucocorticoid-induced apoptosis. Promotes accurate chromosome segregation during mitosis. May act as a tumor suppressor. May play a negative role in adipogenesis through the regulation of lipolytic and antilipogenic gene expression. This Oryctolagus cuniculus (Rabbit) protein is Glucocorticoid receptor (NR3C1).